The chain runs to 321 residues: High osmolarity signaling protein SHO1A (321 aa).

The Cytoplasmic portion of the chain corresponds to 1-28 (MDYNNNRYGGGGGGSKFNLGHIVGDPFS). Residues 29–49 (LATIAIATAGWLIAFVSSIIA) form a helical membrane-spanning segment. Topologically, residues 50–58 (NIDQEYPNY) are extracellular. Asn-57 carries N-linked (GlcNAc...) asparagine glycosylation. A helical membrane pass occupies residues 59-79 (SWWALAYMFFVILGVTFAVAA). Asn-80 is a topological domain (cytoplasmic). The chain crosses the membrane as a helical span at residues 81-101 (AVYTYHVAMVGFLAAGLVFTT). Topologically, residues 102 to 116 (SSVNSLIYWSDKAKQ) are extracellular. The chain crosses the membrane as a helical span at residues 117-137 (AAAAGFILLSMVSIVWIFYFG). Over 138–321 (SQPTASHRQT…IAPSNYLILL (184 aa)) the chain is Cytoplasmic. Disordered regions lie at residues 155 to 181 (KDHAPSRASRHMTQSYRPETTHSAQHP) and 194 to 261 (TSSP…QQPT). Composition is skewed to polar residues over residues 165 to 181 (HMTQSYRPETTHSAQHP) and 225 to 237 (NFSNNQQPNPITS). Positions 238–249 (QNNPQNQHQQPQ) are enriched in low complexity. Polar residues predominate over residues 250–261 (DLTSPSTTQQPT). An SH3 domain is found at 262–321 (EYPYRAKAIYSYEANPDDANEISFNKHEILEVSDVSGRWWQAKKENGETGIAPSNYLILL).

This sequence belongs to the SHO1 family. In terms of assembly, forms homooligomers.

The protein localises to the cell membrane. Its function is as follows. Plasma membrane osmosensor that activates the high osmolarity glycerol (HOG) MAPK signaling pathway in response to high osmolarity. This chain is High osmolarity signaling protein SHO1A (SHO1A), found in Hortaea werneckii.